The following is a 214-amino-acid chain: ATP phosphoribosyltransferase (214 aa).

This sequence belongs to the ATP phosphoribosyltransferase family. Short subfamily. As to quaternary structure, heteromultimer composed of HisG and HisZ subunits.

It localises to the cytoplasm. The enzyme catalyses 1-(5-phospho-beta-D-ribosyl)-ATP + diphosphate = 5-phospho-alpha-D-ribose 1-diphosphate + ATP. The protein operates within amino-acid biosynthesis; L-histidine biosynthesis; L-histidine from 5-phospho-alpha-D-ribose 1-diphosphate: step 1/9. Its function is as follows. Catalyzes the condensation of ATP and 5-phosphoribose 1-diphosphate to form N'-(5'-phosphoribosyl)-ATP (PR-ATP). Has a crucial role in the pathway because the rate of histidine biosynthesis seems to be controlled primarily by regulation of HisG enzymatic activity. This is ATP phosphoribosyltransferase from Leptothrix cholodnii (strain ATCC 51168 / LMG 8142 / SP-6) (Leptothrix discophora (strain SP-6)).